The primary structure comprises 172 residues: MSSKRAKTKTTKKRPQRATSNVFAMFDQSQIQEFKEAFNMIDQNRDGFIDKEDLHDMLASLGKNPTDEYLDAMMNEAPGPINFTMFLTMFGEKLNGTDPEDVIRNAFACFDEEATGTIQEDYLRELLTTMGDRFTDEEVDELYREAPIDKKGNFNYIEFTRILKHGAKDKDD.

Positions 1–16 (MSSKRAKTKTTKKRPQ) are enriched in basic residues. A disordered region spans residues 1-20 (MSSKRAKTKTTKKRPQRATS). An N-acetylserine modification is found at S2. T19 is subject to Phosphothreonine; by MLCK, CIT and ROCK2. Residue S20 is modified to Phosphoserine; by CDC42BP, CIT, MLCK, PAK1, ROCK1, ROCK2, DAPK1, DAPK2 and ZIPK/DAPK3. EF-hand domains are found at residues 29-64 (SQIQEFKEAFNMIDQNRDGFIDKEDLHDMLASLGKN), 98-133 (DPEDVIRNAFACFDEEATGTIQEDYLRELLTTMGDR), and 134-169 (FTDEEVDELYREAPIDKKGNFNYIEFTRILKHGAKD). D42, N44, D46, and D53 together coordinate Ca(2+).

In terms of assembly, myosin is a hexamer of 2 heavy chains and 4 light chains: interacts with myosin heavy chain MYO19. Interacts with LUZP1; the interaction results in inhibition of phosphorylation of MYL9 by DAPK3. In terms of processing, phosphorylation increases the actin-activated myosin ATPase activity and thereby regulates the contractile activity. It is required to generate the driving force in the migration of the cells but not necessary for localization of myosin-2 at the leading edge. Phosphorylation is required for myotube formation. Phosphorylated by DAPK3; DAPK3-mediated phosphorylation is inhibited by LUZP1.

It localises to the cytoplasm. The protein localises to the cytoskeleton. It is found in the cell cortex. Functionally, myosin regulatory subunit that plays an important role in regulation of both smooth muscle and nonmuscle cell contractile activity via its phosphorylation. Implicated in cytokinesis, receptor capping, and cell locomotion. In myoblasts, may regulate PIEZO1-dependent cortical actomyosin assembly involved in myotube formation. This chain is Myosin regulatory light polypeptide 9 (MYL9), found in Bos taurus (Bovine).